The sequence spans 75 residues: Translation initiation factor IF-1 (75 aa).

Positions 1–75 (MANLPKEQKL…SKGRIVYRFK (75 aa)) constitute an S1-like domain.

It belongs to the IF-1 family. In terms of assembly, component of the 30S ribosomal translation pre-initiation complex which assembles on the 30S ribosome in the order IF-2 and IF-3, IF-1 and N-formylmethionyl-tRNA(fMet); mRNA recruitment can occur at any time during PIC assembly.

The protein resides in the cytoplasm. Its function is as follows. One of the essential components for the initiation of protein synthesis. Stabilizes the binding of IF-2 and IF-3 on the 30S subunit to which N-formylmethionyl-tRNA(fMet) subsequently binds. Helps modulate mRNA selection, yielding the 30S pre-initiation complex (PIC). Upon addition of the 50S ribosomal subunit IF-1, IF-2 and IF-3 are released leaving the mature 70S translation initiation complex. The protein is Translation initiation factor IF-1 of Mesomycoplasma hyopneumoniae (strain 232) (Mycoplasma hyopneumoniae).